The primary structure comprises 120 residues: UPF0102 protein Caur_2698 (120 aa).

It belongs to the UPF0102 family.

The chain is UPF0102 protein Caur_2698 from Chloroflexus aurantiacus (strain ATCC 29366 / DSM 635 / J-10-fl).